A 298-amino-acid chain; its full sequence is Probable endonuclease 4 (298 aa).

Positions 69, 111, 146, 180, 183, 215, 228, 230, and 260 each coordinate Zn(2+).

Belongs to the AP endonuclease 2 family. It depends on Zn(2+) as a cofactor.

The enzyme catalyses Endonucleolytic cleavage to 5'-phosphooligonucleotide end-products.. Endonuclease IV plays a role in DNA repair. It cleaves phosphodiester bonds at apurinic or apyrimidinic (AP) sites, generating a 3'-hydroxyl group and a 5'-terminal sugar phosphate. This Bacillus cereus (strain B4264) protein is Probable endonuclease 4.